The sequence spans 334 residues: Uroporphyrinogen decarboxylase (334 aa).

Substrate contacts are provided by residues 22–26, D71, Y140, S195, and H310; that span reads RQVGR.

The protein belongs to the uroporphyrinogen decarboxylase family. Homodimer.

The protein resides in the cytoplasm. The catalysed reaction is uroporphyrinogen III + 4 H(+) = coproporphyrinogen III + 4 CO2. It participates in porphyrin-containing compound metabolism; protoporphyrin-IX biosynthesis; coproporphyrinogen-III from 5-aminolevulinate: step 4/4. In terms of biological role, catalyzes the decarboxylation of four acetate groups of uroporphyrinogen-III to yield coproporphyrinogen-III. This is Uroporphyrinogen decarboxylase from Chlamydia muridarum (strain MoPn / Nigg).